A 118-amino-acid chain; its full sequence is UPF0102 protein CHY_1414 (118 aa).

Belongs to the UPF0102 family.

The sequence is that of UPF0102 protein CHY_1414 from Carboxydothermus hydrogenoformans (strain ATCC BAA-161 / DSM 6008 / Z-2901).